Consider the following 268-residue polypeptide: GTP cyclohydrolase FolE2 (268 aa).

The protein belongs to the GTP cyclohydrolase IV family.

The catalysed reaction is GTP + H2O = 7,8-dihydroneopterin 3'-triphosphate + formate + H(+). It functions in the pathway cofactor biosynthesis; 7,8-dihydroneopterin triphosphate biosynthesis; 7,8-dihydroneopterin triphosphate from GTP: step 1/1. Converts GTP to 7,8-dihydroneopterin triphosphate. This is GTP cyclohydrolase FolE2 from Ralstonia nicotianae (strain ATCC BAA-1114 / GMI1000) (Ralstonia solanacearum).